The chain runs to 215 residues: Oligoribonuclease (215 aa).

An Exonuclease domain is found at 5-170 (LVWIDCEMTG…ADIHESIREL (166 aa)). The active site involves Tyr127. Positions 196–215 (LGPPGKDAADTDSAAGHTTG) are disordered.

The protein belongs to the oligoribonuclease family.

The protein localises to the cytoplasm. Its function is as follows. 3'-to-5' exoribonuclease specific for small oligoribonucleotides. The chain is Oligoribonuclease from Mycobacterium sp. (strain JLS).